The sequence spans 739 residues: Phosphoribosylformylglycinamidine synthase subunit PurL (739 aa).

H54 is an active-site residue. ATP contacts are provided by Y57 and K96. Position 98 (E98) interacts with Mg(2+). Residues S99–H102 and R121 each bind substrate. H100 serves as the catalytic Proton acceptor. D122 lines the Mg(2+) pocket. Residue Q245 coordinates substrate. D275 is a binding site for Mg(2+). E319–Q321 serves as a coordination point for substrate. The ATP site is built by D504 and G541. Residue N542 coordinates Mg(2+). Substrate is bound at residue S544.

Belongs to the FGAMS family. As to quaternary structure, monomer. Part of the FGAM synthase complex composed of 1 PurL, 1 PurQ and 2 PurS subunits.

The protein localises to the cytoplasm. It carries out the reaction N(2)-formyl-N(1)-(5-phospho-beta-D-ribosyl)glycinamide + L-glutamine + ATP + H2O = 2-formamido-N(1)-(5-O-phospho-beta-D-ribosyl)acetamidine + L-glutamate + ADP + phosphate + H(+). It functions in the pathway purine metabolism; IMP biosynthesis via de novo pathway; 5-amino-1-(5-phospho-D-ribosyl)imidazole from N(2)-formyl-N(1)-(5-phospho-D-ribosyl)glycinamide: step 1/2. Functionally, part of the phosphoribosylformylglycinamidine synthase complex involved in the purines biosynthetic pathway. Catalyzes the ATP-dependent conversion of formylglycinamide ribonucleotide (FGAR) and glutamine to yield formylglycinamidine ribonucleotide (FGAM) and glutamate. The FGAM synthase complex is composed of three subunits. PurQ produces an ammonia molecule by converting glutamine to glutamate. PurL transfers the ammonia molecule to FGAR to form FGAM in an ATP-dependent manner. PurS interacts with PurQ and PurL and is thought to assist in the transfer of the ammonia molecule from PurQ to PurL. This Lactococcus lactis subsp. cremoris (Streptococcus cremoris) protein is Phosphoribosylformylglycinamidine synthase subunit PurL.